Here is a 132-residue protein sequence, read N- to C-terminus: Small ribosomal subunit protein uS11 (132 aa).

The protein belongs to the universal ribosomal protein uS11 family. Part of the 30S ribosomal subunit.

Located on the platform of the 30S subunit. This is Small ribosomal subunit protein uS11 from Sulfurisphaera tokodaii (strain DSM 16993 / JCM 10545 / NBRC 100140 / 7) (Sulfolobus tokodaii).